A 306-amino-acid polypeptide reads, in one-letter code: Secreted RxLR effector protein 76 (306 aa).

Positions 1-21 are cleaved as a signal peptide; the sequence is MSGAFYVFTALLLVASDQIAA. The short motif at 48-65 is the RxLR-dEER element; it reads RFLRGSRDEPDNLANEER. A disordered region spans residues 105-142; that stretch reads AAKAVKKRPRGAKAGRKMPRAAEAEAVKKVPRAGTAVK. Residues 107–123 are compositionally biased toward basic residues; the sequence is KAVKKRPRGAKAGRKMP.

This sequence belongs to the RxLR effector family.

Its subcellular location is the secreted. It is found in the host nucleus. Functionally, secreted effector that partially suppresses the host cell death induced by cell death-inducing proteins. The sequence is that of Secreted RxLR effector protein 76 from Plasmopara viticola (Downy mildew of grapevine).